An 839-amino-acid polypeptide reads, in one-letter code: Autophagy-related protein 9A (839 aa).

A disordered region spans residues 1–20 (MAQFDTEYQRLEASYSDSPP). Residue Ala-2 is modified to N-acetylalanine. The Cytoplasmic portion of the chain corresponds to 2–61 (AQFDTEYQRLEASYSDSPPGEEDLLVHVAEGSKSPWHHIENLDLFFSRVYNLHQKNGFTC). Positions 8-11 (YQRL) match the Tyrosine-based sorting signal motif. Residues Ser-14, Ser-16, and Ser-18 each carry the phosphoserine modification. The helical transmembrane segment at 62 to 84 (MLIGEIFELMQFLFVVAFTTFLV) threads the bilayer. Residues 85 to 128 (SCVDYDILFANKMVNHSLHPTEPVKVTLPDAFLPAQVCSARIQE) lie on the Lumenal side of the membrane. Asn-99 carries an N-linked (GlcNAc...) asparagine glycan. A helical membrane pass occupies residues 129 to 154 (NGSLITILVIAGVFWIHRLIKFIYNI). Over 155 to 290 (CCYWEIHSFY…ELAQRLSNRI (136 aa)) the chain is Cytoplasmic. An intramembrane segment occupies 291-301 (LWIGIANFLLC). Over 302–319 (PLILIWQILYAFFSYAEV) the chain is Cytoplasmic. An intramembrane segment occupies 320–328 (LKREPGALG). Over 329-371 (ARCWSLYGRCYLRHFNELEHELQSRLNRGYKPASKYMNCFLSP) the chain is Cytoplasmic. The helical transmembrane segment at 372–397 (LLTLLAKNGAFFAGSILAVLIALTIY) threads the bilayer. Over 398-406 (DEDVLAVEH) the chain is Lumenal. Residues 407–424 (VLTTVTLLGVTVTVCRSF) form a helical membrane-spanning segment. The Cytoplasmic portion of the chain corresponds to 425 to 470 (IPDQHMVFCPEQLLRVILAHIHYMPDHWQGNAHRSQTRDEFAQLFQ). The stretch at 471–480 (YKAVFILEEL) is an intramembrane region. At 481–483 (LSP) the chain is on the cytoplasmic side. The stretch at 484 to 492 (IVTPLILIF) is an intramembrane region. The Cytoplasmic portion of the chain corresponds to 493 to 839 (CLRPRALEII…DELPPQVHKV (347 aa)). Residues Ser-656, Ser-735, Ser-738, Ser-741, and Ser-828 each carry the phosphoserine modification. Disordered stretches follow at residues 656 to 686 (SPLQ…SSGS) and 717 to 839 (HKQQ…VHKV). Over residues 724–736 (EPERHVWHRRESD) the composition is skewed to basic and acidic residues. Composition is skewed to acidic residues over residues 737–747 (ESGESAPDEGG) and 823–832 (VPEEGSEDEL).

It belongs to the ATG9 family. In terms of assembly, homotrimer; forms a homotrimer with a central pore that forms a path between the two membrane leaflets. Interacts (via cytoplasmic its C-terminus) with ATG2A. Interacts with SUPT20H. Interacts (via the tyrosine-based sorting signal motif) with AP4M1; promoting association with the AP-4 complex. Interacts with ARFIP1 and ARFIP2. Interacts with PI4K2A and PI4KB. Interacts with ATG4A; the interaction is direct and promotes ATG9A trafficking. In terms of processing, ufmylated in a DDRGK1 dependent manner.

The protein localises to the preautophagosomal structure membrane. The protein resides in the cytoplasmic vesicle. Its subcellular location is the autophagosome membrane. It localises to the golgi apparatus. It is found in the trans-Golgi network membrane. The protein localises to the late endosome membrane. The protein resides in the recycling endosome membrane. Its subcellular location is the endoplasmic reticulum membrane. It localises to the mitochondrion membrane. It catalyses the reaction a 1,2-diacyl-sn-glycero-3-phosphocholine(in) = a 1,2-diacyl-sn-glycero-3-phosphocholine(out). It carries out the reaction a 1,2-diacyl-sn-glycero-3-phospho-L-serine(in) = a 1,2-diacyl-sn-glycero-3-phospho-L-serine(out). The enzyme catalyses a 1,2-diacyl-sn-glycero-3-phosphoethanolamine(in) = a 1,2-diacyl-sn-glycero-3-phosphoethanolamine(out). Phospholipid scramblase involved in autophagy by mediating autophagosomal membrane expansion. Cycles between the preautophagosomal structure/phagophore assembly site (PAS) and the cytoplasmic vesicle pool and supplies membrane for the growing autophagosome. Lipid scramblase activity plays a key role in preautophagosomal structure/phagophore assembly by distributing the phospholipids that arrive through ATG2 (ATG2A or ATG2B) from the cytoplasmic to the luminal leaflet of the bilayer, thereby driving autophagosomal membrane expansion. Also required to supply phosphatidylinositol 4-phosphate to the autophagosome initiation site by recruiting the phosphatidylinositol 4-kinase beta (PI4KB) in a process dependent on ARFIP2, but not ARFIP1. In addition to autophagy, also plays a role in necrotic cell death. The polypeptide is Autophagy-related protein 9A (Homo sapiens (Human)).